A 63-amino-acid polypeptide reads, in one-letter code: Hyphancin-3F (63 aa).

The first 22 residues, 1 to 22, serve as a signal peptide directing secretion; that stretch reads MNFSRILFFVFACFVALASVSA. Residues 23 to 26 constitute a propeptide, removed by a dipeptidylpeptidase; sequence APEP. Leu61 is subject to Leucine amide.

Belongs to the cecropin family.

The protein resides in the secreted. In terms of biological role, has antibacterial activity. In Hyphantria cunea (Fall webworm moth), this protein is Hyphancin-3F.